We begin with the raw amino-acid sequence, 786 residues long: MEISTENWCKKPKNRSIFSKNISFQKQNKSTEEPPSSVQKLLASLQQAQNKSDLSEQPSTSKPKKNEKRKKAVAQAPASAPAPGPEEKKKQPKRASVGARMQQQAENARISQTKRPRQVSTSKGSSRNTTAPEQQNYQQQQQQYKGPRIPTDILDELEFRFISNMVECEINDNIRVCFHLELAHWYYIDHMVEDDKISGCPNVGSRDFNFQMCQHCRVLRKYAHRADEVLAKFREYKSTVPTYGAILVDPEMDHVVLVQSYFAKGKNWGFPKGKINQAEPPRDAAIRETFEETGFDFGIYSEKEKKFQRFINDGMVRLYLVKNVPKDFNFQPQTRKEIRKIEWFKIDDLPTDKTDELPAYLQGNKFYMVMPFVKDIQIYVQKEKEKLRRRKAEAVQSTPSSSIFSQLFPAQPPPPVPEDATPTRPMYKRLTSEELFSAFKNPPAGEVARPTLPDMSPAVNGLDTLAVLGICTPLKPGASLNEFSGAPQNCPMISEEAGSPADPSAEIGFAMPMDLKQPVVTSDHPWQHHKISDSSAPPQTLESHQGWLDTQLVNTIMHSPNHPLPPTSNSPATPTAVLGHLIGKPIQPQAILPQAATPTALGSAEKPKSSRISLSDNSAFKAISSTQKQSIPKATAAPPSTEKTRSASLSGSSQVVGKPARNLFNSVVSPVSSGIQSIQGDGGAWEDVWFREQLAATTTAGTSISSLAASNQELAMINREETPIEDPYFKQQAYQKAQKAQSLIPACSQWTNSIKLDIDYVVGPLSFWMQQFSTKSPVSGTGPQLP.

The span at 25 to 61 (QKQNKSTEEPPSSVQKLLASLQQAQNKSDLSEQPSTS) shows a compositional bias: polar residues. Positions 25-148 (QKQNKSTEEP…QQQQQYKGPR (124 aa)) are disordered. The span at 62–72 (KPKKNEKRKKA) shows a compositional bias: basic residues. Composition is skewed to polar residues over residues 101–111 (MQQQAENARIS) and 118–133 (QVSTSKGSSRNTTAPE). Low complexity predominate over residues 134–144 (QQNYQQQQQQY). The region spanning 238 to 366 (STVPTYGAIL…LPAYLQGNKF (129 aa)) is the Nudix hydrolase domain. The Nudix box signature appears at 273-294 (GKINQAEPPRDAAIRETFEETG). Mg(2+)-binding residues include Glu288 and Glu292. 2 disordered regions span residues 556-576 (IMHSPNHPLPPTSNSPATPTA) and 623-655 (ISSTQKQSIPKATAAPPSTEKTRSASLSGSSQV). Composition is skewed to polar residues over residues 623–632 (ISSTQKQSIP) and 646–655 (SASLSGSSQV).

The protein belongs to the Nudix hydrolase family. DCP2 subfamily. In terms of assembly, may be a component of the decapping complex composed of dcap-1 and dcap-2. Mg(2+) serves as cofactor. Requires Mn(2+) as cofactor. Expressed in sensory neurons.

It is found in the cytoplasmic granule. The protein localises to the cytoplasm. It localises to the perinuclear region. The catalysed reaction is a 5'-end (N(7)-methyl 5'-triphosphoguanosine)-ribonucleoside in mRNA + H2O = N(7)-methyl-GDP + a 5'-end phospho-ribonucleoside in mRNA + 2 H(+). It carries out the reaction a 5'-end (N(2),N(2),N(7)-trimethyl 5'-triphosphoguanosine)-ribonucleoside in mRNA + H2O = N(2),N(2),N(7)-trimethyl-GDP + a 5'-end phospho-ribonucleoside in mRNA + 2 H(+). With respect to regulation, inhibited by capped and uncapped RNA. Not inhibited by dinucleotide cap or methylated nucleotide analogs. Its function is as follows. Decapping metalloenzyme that catalyzes the cleavage of the cap structure on mRNAs. Removes the 7-methyl guanine cap structure from mRNA molecules, yielding a 5'-phosphorylated mRNA fragment and 7m-GDP. RNA-decapping enzyme although it does not bind the RNA cap. May contribute to gene regulation in multiple RNA pathways including monomethylguanosine- and trimethylguanosine-capped RNAs. In oocytes, may play a role in the response to stress induced by heat shock, osmotic stress and anoxia. Required for the developmental axon guidance and regrowth of PLM touch receptor neurons. Early in embryogenesis, plays a role in ciliary shape formation in sensory neurons. Promotes survival at high temperatures. The chain is m7GpppN-mRNA hydrolase dcap-2 from Caenorhabditis elegans.